The following is a 268-amino-acid chain: F-actin-capping protein subunit beta (268 aa).

Belongs to the F-actin-capping protein beta subunit family. Component of the F-actin capping complex, composed of a heterodimer of an alpha and a beta subunit.

The protein resides in the cytoplasm. The protein localises to the cytoskeleton. Its subcellular location is the actin patch. It localises to the nucleus. F-actin-capping proteins bind in a Ca(2+)-independent manner to the fast growing ends of actin filaments (barbed end) thereby blocking the exchange of subunits at these ends. Unlike other capping proteins (such as gelsolin and severin), these proteins do not sever actin filaments. Competes with formin cdc12 for attachment to the actin filaments barbed ends. Slowly replaces cdc12 on the barbed ends in preparation for filament disassembly during contractile ring constriction. This Schizosaccharomyces pombe (strain 972 / ATCC 24843) (Fission yeast) protein is F-actin-capping protein subunit beta (acp2).